The chain runs to 226 residues: Ribonuclease 3 (226 aa).

The 123-residue stretch at 6–128 (FNKLQKKMGY…IIGGIFLDSN (123 aa)) folds into the RNase III domain. Glu41 lines the Mg(2+) pocket. Asp45 is an active-site residue. Residues Asn114 and Glu117 each coordinate Mg(2+). Glu117 is an active-site residue. The region spanning 155-225 (DPKTRLQEYL…AKQALLLFNI (71 aa)) is the DRBM domain.

This sequence belongs to the ribonuclease III family. As to quaternary structure, homodimer. Requires Mg(2+) as cofactor.

It localises to the cytoplasm. The enzyme catalyses Endonucleolytic cleavage to 5'-phosphomonoester.. Digests double-stranded RNA. Involved in the processing of primary rRNA transcript to yield the immediate precursors to the large and small rRNAs (23S and 16S). Processes some mRNAs, and tRNAs when they are encoded in the rRNA operon. Processes pre-crRNA and tracrRNA of type II CRISPR loci if present in the organism. The chain is Ribonuclease 3 from Wigglesworthia glossinidia brevipalpis.